The following is a 190-amino-acid chain: dTTP/UTP pyrophosphatase (190 aa).

The active-site Proton acceptor is the aspartate 71.

The protein belongs to the Maf family. YhdE subfamily. The cofactor is a divalent metal cation.

It localises to the cytoplasm. It carries out the reaction dTTP + H2O = dTMP + diphosphate + H(+). It catalyses the reaction UTP + H2O = UMP + diphosphate + H(+). Its function is as follows. Nucleoside triphosphate pyrophosphatase that hydrolyzes dTTP and UTP. May have a dual role in cell division arrest and in preventing the incorporation of modified nucleotides into cellular nucleic acids. The sequence is that of dTTP/UTP pyrophosphatase from Xanthomonas axonopodis pv. citri (strain 306).